We begin with the raw amino-acid sequence, 253 residues long: Sporulated oocyst TA4 antigen (253 aa).

The signal sequence occupies residues 1–23 (MARLSFVSLLSLSLLFGQQAVRA). A propeptide spans 182–184 (RRL) (removed in mature form).

In terms of assembly, the TA4 antigen is composed of a 17 kDa and a 8 kDa chain, linked by a disulfide bond.

The sequence is that of Sporulated oocyst TA4 antigen from Eimeria tenella (Coccidian parasite).